The chain runs to 436 residues: MAKKMKLSDITNMFAGMDVEALEGVTIEGDIEIDLGGLGGGFDPMLAAALGQESAVLAQHFARLAGMFGYPVGIGAPAAPAVSPALAAPKLKDLIPAKFDVANIAEWATEIQEVPIGNTSADGGSRGKRVMLGGEKALPFYFDAPMPNRNQVTIDVFDMRIGLAKAVKENYDEVMDSPGEWAKKNVEKFNADMITIHLISTDPLIKDTPAKEAAKTVEEVLQAVDVPIAIGGSGNPQKDPEVLARAAEVSEGERCLLASASLNLDYAAIAEAALKYDHDVLSWTQLDMNAQKELNRKLMKQCNVPRDRIIMDPTTAALGYGLDYAYTNMERIRLAALMGDDELTFPMSSGTTNAWGARESWMVSSPLKEDSDWGPREYRGPIWEIVTGLSLAIAGNDLFMMMHPTSVAVLKQITQTLFGMIDTEQVDVANWIGAEV.

Belongs to the CdhD family. As to quaternary structure, heterodimer of delta and gamma chains. The ACDS complex is made up of alpha, epsilon, beta, gamma and delta chains with a probable stoichiometry of (alpha(2)epsilon(2))(4)-beta(8)-(gamma(1)delta(1))(8) (Potential).

Its pathway is one-carbon metabolism; methanogenesis from acetate. Part of a complex that catalyzes the reversible cleavage of acetyl-CoA, allowing growth on acetate as sole source of carbon and energy. Probably maintains the overall quaternary structure of the ACDS complex. The protein is Acetyl-CoA decarbonylase/synthase complex subunit delta 1 (cdhD1) of Methanosarcina acetivorans (strain ATCC 35395 / DSM 2834 / JCM 12185 / C2A).